The sequence spans 377 residues: Nitric oxide reductase FlRd-NAD(+) reductase (377 aa).

The protein belongs to the FAD-dependent oxidoreductase family. FAD serves as cofactor.

Its subcellular location is the cytoplasm. The enzyme catalyses 2 reduced [nitric oxide reductase rubredoxin domain] + NAD(+) + H(+) = 2 oxidized [nitric oxide reductase rubredoxin domain] + NADH. Its pathway is nitrogen metabolism; nitric oxide reduction. Functionally, one of at least two accessory proteins for anaerobic nitric oxide (NO) reductase. Reduces the rubredoxin moiety of NO reductase. The protein is Nitric oxide reductase FlRd-NAD(+) reductase of Escherichia coli O17:K52:H18 (strain UMN026 / ExPEC).